The chain runs to 428 residues: 3-phosphoshikimate 1-carboxyvinyltransferase (428 aa).

3 residues coordinate 3-phosphoshikimate: lysine 22, serine 23, and arginine 27. Position 22 (lysine 22) interacts with phosphoenolpyruvate. 2 residues coordinate phosphoenolpyruvate: glycine 98 and arginine 126. 7 residues coordinate 3-phosphoshikimate: serine 172, serine 173, glutamine 174, serine 200, aspartate 316, asparagine 339, and lysine 343. Glutamine 174 lines the phosphoenolpyruvate pocket. The active-site Proton acceptor is the aspartate 316. Residues arginine 347, arginine 389, and lysine 414 each coordinate phosphoenolpyruvate.

Belongs to the EPSP synthase family. Monomer.

Its subcellular location is the cytoplasm. The enzyme catalyses 3-phosphoshikimate + phosphoenolpyruvate = 5-O-(1-carboxyvinyl)-3-phosphoshikimate + phosphate. Its pathway is metabolic intermediate biosynthesis; chorismate biosynthesis; chorismate from D-erythrose 4-phosphate and phosphoenolpyruvate: step 6/7. In terms of biological role, catalyzes the transfer of the enolpyruvyl moiety of phosphoenolpyruvate (PEP) to the 5-hydroxyl of shikimate-3-phosphate (S3P) to produce enolpyruvyl shikimate-3-phosphate and inorganic phosphate. The sequence is that of 3-phosphoshikimate 1-carboxyvinyltransferase from Psychromonas ingrahamii (strain DSM 17664 / CCUG 51855 / 37).